The sequence spans 128 residues: Diacylglycerol kinase (128 aa).

Residue Glu34 coordinates a divalent metal cation. A run of 2 helical transmembrane segments spans residues 35–55 (SAFRQIVILALFCIVLASYLA) and 58–78 (FLEWGLLILPCFLSVVVELIN). Catalysis depends on Glu75, which acts as the Proton acceptor. An a divalent metal cation-binding site is contributed by Glu82. The chain crosses the membrane as a helical span at residues 107-127 (QLIGLIFWTLIWGRYLLALYL).

The protein belongs to the bacterial diacylglycerol kinase family. It depends on Mg(2+) as a cofactor.

Its subcellular location is the cell inner membrane. It catalyses the reaction a 1,2-diacyl-sn-glycerol + ATP = a 1,2-diacyl-sn-glycero-3-phosphate + ADP + H(+). Its function is as follows. Catalyzes the ATP-dependent phosphorylation of sn-l,2-diacylglycerol (DAG) to phosphatidic acid. Involved in the recycling of diacylglycerol produced as a by-product during membrane-derived oligosaccharide (MDO) biosynthesis. This chain is Diacylglycerol kinase (dgkA), found in Helicobacter pylori (strain ATCC 700392 / 26695) (Campylobacter pylori).